Reading from the N-terminus, the 287-residue chain is Phosphoribosylaminoimidazole-succinocarboxamide synthase (287 aa).

The protein belongs to the SAICAR synthetase family.

The enzyme catalyses 5-amino-1-(5-phospho-D-ribosyl)imidazole-4-carboxylate + L-aspartate + ATP = (2S)-2-[5-amino-1-(5-phospho-beta-D-ribosyl)imidazole-4-carboxamido]succinate + ADP + phosphate + 2 H(+). It participates in purine metabolism; IMP biosynthesis via de novo pathway; 5-amino-1-(5-phospho-D-ribosyl)imidazole-4-carboxamide from 5-amino-1-(5-phospho-D-ribosyl)imidazole-4-carboxylate: step 1/2. The polypeptide is Phosphoribosylaminoimidazole-succinocarboxamide synthase (Neisseria meningitidis serogroup A / serotype 4A (strain DSM 15465 / Z2491)).